Reading from the N-terminus, the 830-residue chain is C-Jun-amino-terminal kinase-interacting protein 2 (830 aa).

Disordered regions lie at residues 1-26, 44-354, 367-438, 452-504, and 539-574; these read MADRAEMFSLSTFHSLSPPGCRPPQD, CGLG…ADSP, EGSS…PGPC, LWAT…GSTA, and GNDSEEDSSCEASEEEAGATLLGSDQVPEDASPDSP. Acidic residues predominate over residues 77–105; the sequence is DFQEFEMIDDNEEEDDEEEEEEEEEEEDG. A JNK-binding domain (JBD) region spans residues 111-278; the sequence is AGGGPGSQAL…RMISSISETE (168 aa). Residues 142 to 172 are compositionally biased toward polar residues; sequence LHLTTLGAQDSLNNNNGGFTSAPPSSWQETV. 2 stretches are compositionally biased toward low complexity: residues 176 to 190 and 218 to 227; these read PAQEPLKELPAPLLP and ASSGGASPSS. Residues 233–249 show a composition bias toward basic and acidic residues; it reads ADLRSHSSGGHEGRRSS. A necessary for interaction with FGF13 region spans residues 242–504; the sequence is GHEGRRSSQE…PGSRTTGSTA (263 aa). Residues Ser257, Ser304, and Ser307 each carry the phosphoserine modification. Positions 271–307 are enriched in low complexity; it reads ISSISETELELSSDGGSSSGRSSHLTNSIEEASSPAS. Acidic residues predominate over residues 333 to 352; sequence TNSEYESGSESEPDLSEDAD. A compositionally biased stretch (low complexity) spans 427–437; sequence APRLGPAQPGP. 2 stretches are compositionally biased toward acidic residues: residues 471–490 and 541–555; these read SEEEEEDEEEDEEDEEDAED and DSEEDSSCEASEEEA. Positions 610-671 constitute an SH3 domain; it reads EREQTHRAVF…PAFYAHAVPG (62 aa). One can recognise a PID domain in the interval 683–819; that stretch reads PCWVDRFDVQ…FLEYYQEHLA (137 aa).

It belongs to the JIP scaffold family. In terms of assembly, forms homo- or heterooligomeric complexes. Binds specific components of the JNK signaling pathway namely JNK1, JNK2, JNK3, MAP2K7, MAP3K10, MAP3K11, MAP3K12 and MAPK13. Also binds the proline-rich domain-containing splice variant of apolipoprotein E receptor 2 (ApoER2). Binds the TPR motif-containing C-terminal of kinesin light chain. Binds the cytoplasmic tails of LRP1 and LRP2 (Megalin). Interacts with DCLK2. Interacts with FGF13; enables the interaction with MAPK13 and may regulate the MAPK8IP2 scaffolding activity. Interacts with TIAM1 and TIAM2. Interacts with SH3RF2. In terms of tissue distribution, highly expressed in brain. Expressed in all neurons. Also expressed in testis, primarily in the epididymal epidermis.

The protein localises to the cytoplasm. In terms of biological role, the JNK-interacting protein (JIP) group of scaffold proteins selectively mediates JNK signaling by aggregating specific components of the MAPK cascade to form a functional JNK signaling module. JIP2 inhibits IL1 beta-induced apoptosis in insulin-secreting cells. This Mus musculus (Mouse) protein is C-Jun-amino-terminal kinase-interacting protein 2 (Mapk8ip2).